Reading from the N-terminus, the 271-residue chain is Formamidopyrimidine-DNA glycosylase (271 aa).

The active-site Schiff-base intermediate with DNA is the proline 2. The Proton donor role is filled by glutamate 3. Lysine 56 functions as the Proton donor; for beta-elimination activity in the catalytic mechanism. The DNA site is built by histidine 89, arginine 107, and lysine 151. The segment at 236 to 270 adopts an FPG-type zinc-finger fold; that stretch reads NVYGRAGLQCRQCGTPVRLSRQGQRSTYFCPHCQR. Arginine 260 (proton donor; for delta-elimination activity) is an active-site residue.

Belongs to the FPG family. As to quaternary structure, monomer. Zn(2+) is required as a cofactor.

The catalysed reaction is Hydrolysis of DNA containing ring-opened 7-methylguanine residues, releasing 2,6-diamino-4-hydroxy-5-(N-methyl)formamidopyrimidine.. It carries out the reaction 2'-deoxyribonucleotide-(2'-deoxyribose 5'-phosphate)-2'-deoxyribonucleotide-DNA = a 3'-end 2'-deoxyribonucleotide-(2,3-dehydro-2,3-deoxyribose 5'-phosphate)-DNA + a 5'-end 5'-phospho-2'-deoxyribonucleoside-DNA + H(+). Involved in base excision repair of DNA damaged by oxidation or by mutagenic agents. Acts as a DNA glycosylase that recognizes and removes damaged bases. Has a preference for oxidized purines, such as 7,8-dihydro-8-oxoguanine (8-oxoG). Has AP (apurinic/apyrimidinic) lyase activity and introduces nicks in the DNA strand. Cleaves the DNA backbone by beta-delta elimination to generate a single-strand break at the site of the removed base with both 3'- and 5'-phosphates. This Acidovorax ebreus (strain TPSY) (Diaphorobacter sp. (strain TPSY)) protein is Formamidopyrimidine-DNA glycosylase.